Here is a 345-residue protein sequence, read N- to C-terminus: Phosphoribosylformylglycinamidine cyclo-ligase (345 aa).

It belongs to the AIR synthase family.

The protein localises to the cytoplasm. The catalysed reaction is 2-formamido-N(1)-(5-O-phospho-beta-D-ribosyl)acetamidine + ATP = 5-amino-1-(5-phospho-beta-D-ribosyl)imidazole + ADP + phosphate + H(+). The protein operates within purine metabolism; IMP biosynthesis via de novo pathway; 5-amino-1-(5-phospho-D-ribosyl)imidazole from N(2)-formyl-N(1)-(5-phospho-D-ribosyl)glycinamide: step 2/2. This is Phosphoribosylformylglycinamidine cyclo-ligase from Shewanella loihica (strain ATCC BAA-1088 / PV-4).